The chain runs to 426 residues: Glutamate-1-semialdehyde 2,1-aminomutase (426 aa).

Lysine 265 is subject to N6-(pyridoxal phosphate)lysine.

The protein belongs to the class-III pyridoxal-phosphate-dependent aminotransferase family. HemL subfamily. As to quaternary structure, homodimer. The cofactor is pyridoxal 5'-phosphate.

Its subcellular location is the cytoplasm. The enzyme catalyses (S)-4-amino-5-oxopentanoate = 5-aminolevulinate. It functions in the pathway porphyrin-containing compound metabolism; protoporphyrin-IX biosynthesis; 5-aminolevulinate from L-glutamyl-tRNA(Glu): step 2/2. The polypeptide is Glutamate-1-semialdehyde 2,1-aminomutase (Shigella boydii serotype 4 (strain Sb227)).